Here is an 893-residue protein sequence, read N- to C-terminus: Flippase kinase 1 (893 aa).

Over residues methionine 1–leucine 23 the composition is skewed to basic and acidic residues. Disordered stretches follow at residues methionine 1–leucine 124, proline 129–proline 148, and glutamine 163–glycine 243. The span at glutamine 24–leucine 42 shows a compositional bias: polar residues. Residues asparagine 49 to asparagine 62 show a composition bias toward low complexity. Residues asparagine 76–phenylalanine 87 show a composition bias toward polar residues. A compositionally biased stretch (low complexity) spans serine 96–serine 122. Phosphoserine occurs at positions 140, 144, 171, 175, and 185. Over residues serine 206–serine 216 the composition is skewed to low complexity. The span at glycine 228 to proline 237 shows a compositional bias: polar residues. The residue at position 300 (serine 300) is a Phosphoserine. Residues aspartate 334–proline 355 are compositionally biased toward polar residues. Residues aspartate 334–lysine 480 form a disordered region. Over residues asparagine 370–glutamine 380 the composition is skewed to basic and acidic residues. Residues glutamine 381–lysine 399 are compositionally biased toward polar residues. At serine 414 the chain carries Phosphoserine. Low complexity predominate over residues alanine 422–serine 439. Serine 462 is modified (phosphoserine). One can recognise a Protein kinase domain in the interval phenylalanine 496 to phenylalanine 777. Residues leucine 502–valine 510 and lysine 525 each bind ATP. Aspartate 621 serves as the catalytic Proton acceptor. In terms of domain architecture, AGC-kinase C-terminal spans lysine 778–serine 861. The interval alanine 874 to arginine 893 is disordered. Over residues serine 884–arginine 893 the composition is skewed to basic residues.

This sequence belongs to the protein kinase superfamily. Ser/Thr protein kinase family. KIN82 subfamily. The N-terminal non-catalytic domain is phosphorylated by YPK1.

It is found in the cytoplasm. Its subcellular location is the cell membrane. The enzyme catalyses L-seryl-[protein] + ATP = O-phospho-L-seryl-[protein] + ADP + H(+). The catalysed reaction is L-threonyl-[protein] + ATP = O-phospho-L-threonyl-[protein] + ADP + H(+). With respect to regulation, down-regulated by YKP1 phosphorylation. This effect is counteracted in the presence of mannosyl-inositolphosphorylceramide (MIPC). Flippase activator that phosphorylates DNF1 and DNF2 and which is involved in the generation of phospholipid asymmetry in membranes by the inward translocation of phospholipids and in the retrieval pathway from early endosomes to the trans-Golgi network (TGN). Also phosphorylates the N-terminal half of YPK1. Involved in pheromone-response. The sequence is that of Flippase kinase 1 (FPK1) from Saccharomyces cerevisiae (strain ATCC 204508 / S288c) (Baker's yeast).